The sequence spans 505 residues: MAKKPTALIILDGFANRESEHGNAVKLANKPNFDRYYNKYPTTQIEASGLDVGLPEGQMGNSEVGHMNIGAGRIVYQSLTRINKSIEDGDFFENDVLNNAIAHVNSHDSALHIFGLLSDGGVHSHYKHLFALLELAKKQGVEKVYVHAFLDGRDVDQKSALKYIEETEAKFNELGIGQFASVSGRYYAMDRDKRWEREEKAYNAIRNFDAPTYATAKEGVEASYNEGLTDEFVVPFIVENQNDGVNDGDTVIFYNFRPDRAAQLSEIFANRAFEGFKVEQVKDLFYATFTKYNDNIDAAIVFEKVDLNNTIGEIAQNNNLTQLRIAETEKYPHVTYFMSGGRNEEFKGERRRLIDSPKVATYDLKPEMSAYEVKDALLEELNKGDLDLIILNFANPDMVGHSGMLEPTIKAIEAVDECLGEVVDKILDMDGYAIITADHGNSDQVLTDDDQPMTTHTTNPVPVIVTKEGVTLRETGRLGDLAPTLLDLLNVEQPEDMTGESLIKH.

Mn(2+) is bound by residues Asp-12 and Ser-62. The Phosphoserine intermediate role is filled by Ser-62. Substrate is bound by residues His-123, 153-154 (RD), Arg-185, Arg-191, 257-260 (RPDR), and Lys-330. Positions 397, 401, 438, 439, and 456 each coordinate Mn(2+).

This sequence belongs to the BPG-independent phosphoglycerate mutase family. Monomer. Mn(2+) serves as cofactor.

It catalyses the reaction (2R)-2-phosphoglycerate = (2R)-3-phosphoglycerate. Its pathway is carbohydrate degradation; glycolysis; pyruvate from D-glyceraldehyde 3-phosphate: step 3/5. Catalyzes the interconversion of 2-phosphoglycerate and 3-phosphoglycerate. The sequence is that of 2,3-bisphosphoglycerate-independent phosphoglycerate mutase from Staphylococcus aureus (strain Mu50 / ATCC 700699).